We begin with the raw amino-acid sequence, 89 residues long: Small ribosomal subunit protein uS15 (89 aa).

Residues 1–21 (MALSPEKKNEIIENFKTHEGD) show a composition bias toward basic and acidic residues. Residues 1 to 23 (MALSPEKKNEIIENFKTHEGDTG) are disordered.

This sequence belongs to the universal ribosomal protein uS15 family. In terms of assembly, part of the 30S ribosomal subunit. Forms a bridge to the 50S subunit in the 70S ribosome, contacting the 23S rRNA.

In terms of biological role, one of the primary rRNA binding proteins, it binds directly to 16S rRNA where it helps nucleate assembly of the platform of the 30S subunit by binding and bridging several RNA helices of the 16S rRNA. Forms an intersubunit bridge (bridge B4) with the 23S rRNA of the 50S subunit in the ribosome. This is Small ribosomal subunit protein uS15 from Desulforamulus reducens (strain ATCC BAA-1160 / DSM 100696 / MI-1) (Desulfotomaculum reducens).